Consider the following 494-residue polypeptide: Aldehyde dehydrogenase (494 aa).

223 to 228 contributes to the NAD(+) binding site; sequence GSTTAG. Catalysis depends on residues Glu-245 and Cys-279.

This sequence belongs to the aldehyde dehydrogenase family.

The enzyme catalyses an aldehyde + NAD(+) + H2O = a carboxylate + NADH + 2 H(+). It functions in the pathway mycotoxin biosynthesis. Its function is as follows. Aldehyde dehydrogenase; part of the gene cluster that mediates the biosynthesis of the selective antifungal agent ascochitine, an o-quinone methide that plays a possible protective role against other microbial competitors in nature and is considered to be important for pathogenicity of legume-associated Didymella species. The pathway probably begins with the synthesis of a keto-aldehyde intermediate by the ascochitine non-reducing polyketide synthase pksAC from successive condensations of 4 malonyl-CoA units, presumably with a simple acetyl-CoA starter unit. Release of the keto-aldehyde intermediate is consistent with the presence of the C-terminal reductive release domain. The HR-PKS (orf7) probably makes a diketide starter unit which is passed to the non-reducing polyketide synthase pksAC for further extension, producing ascochital and ascochitine. The aldehyde dehydrogenase (orf1), the 2-oxoglutarate-dependent dioxygenase (orf3) and the dehydrogenase (orf9) are probably involved in subsequent oxidations of methyl groups to the carboxylic acid of the heterocyclic ring. The ascochitine gene cluster also includes a gene encoding a short peptide with a cupin domain (orf2) that is often found in secondary metabolite gene clusters and which function has still to be determined. The chain is Aldehyde dehydrogenase from Didymella fabae (Leaf and pod spot disease fungus).